A 24-amino-acid polypeptide reads, in one-letter code: Brevinin-1Pd (24 aa).

A disulfide bridge links Cys-18 with Cys-24.

Expressed by the skin glands.

The protein resides in the secreted. Functionally, antibacterial activity against Gram-positive bacterium S.aureus and Gram-negative bacterium E.coli. Has activity against C.albicans. The polypeptide is Brevinin-1Pd (Lithobates pipiens (Northern leopard frog)).